We begin with the raw amino-acid sequence, 234 residues long: Glutamine synthetase (234 aa).

Residues 1-234 (KAQEPWFGIE…TRLLVETTLL (234 aa)) enclose the GS catalytic domain. Residues 126–157 (GSGGHVNFSNRQPESPPAGKQSRSSAKKLGKR) form a disordered region.

It belongs to the glutamine synthetase family. As to quaternary structure, homooctamer.

It is found in the cytoplasm. It catalyses the reaction L-glutamate + NH4(+) + ATP = L-glutamine + ADP + phosphate + H(+). The polypeptide is Glutamine synthetase (Dunaliella salina (Green alga)).